We begin with the raw amino-acid sequence, 128 residues long: NADH-ubiquinone oxidoreductase chain 3 (128 aa).

Transmembrane regions (helical) follow at residues 4 to 24, 50 to 70, and 86 to 106; these read FIIFIILIPIVGFALLAVNIL, LAFNAAFILVAILFLPFDLEI, and YGFTIVLLFLLILIIGFVYEI.

This sequence belongs to the complex I subunit 3 family. Complex I is composed of 37 different subunits.

It localises to the mitochondrion membrane. It carries out the reaction a ubiquinone + NADH + 5 H(+)(in) = a ubiquinol + NAD(+) + 4 H(+)(out). Core subunit of the mitochondrial membrane respiratory chain NADH dehydrogenase (Complex I) that is believed to belong to the minimal assembly required for catalysis. Complex I functions in the transfer of electrons from NADH to the respiratory chain. The immediate electron acceptor for the enzyme is believed to be ubiquinone. The chain is NADH-ubiquinone oxidoreductase chain 3 (ND3) from Yarrowia lipolytica (strain CLIB 122 / E 150) (Yeast).